The primary structure comprises 348 residues: D-alanine--D-alanine ligase (348 aa).

Residues 132–334 (KRILEVAGVP…YSDLIKELVV (203 aa)) enclose the ATP-grasp domain. An ATP-binding site is contributed by 162–217 (LEKLTFPVFVKPANMGSSVGISKAENESELRSAIDLALKYDSRILIEQGVVAREIE). Asp288, Glu301, and Asn303 together coordinate Mg(2+).

Belongs to the D-alanine--D-alanine ligase family. Mg(2+) serves as cofactor. Requires Mn(2+) as cofactor.

It localises to the cytoplasm. It carries out the reaction 2 D-alanine + ATP = D-alanyl-D-alanine + ADP + phosphate + H(+). The protein operates within cell wall biogenesis; peptidoglycan biosynthesis. Its function is as follows. Cell wall formation. This chain is D-alanine--D-alanine ligase, found in Streptococcus thermophilus (strain ATCC BAA-250 / LMG 18311).